The following is a 207-amino-acid chain: Claudin-11 (207 aa).

Met1 is a topological domain (cytoplasmic). Residues Val2–Ile22 traverse the membrane as a helical segment. Over Val23–Arg82 the chain is Extracellular. The helical transmembrane segment at Ala83–Leu103 threads the bilayer. Topologically, residues Pro104–Leu122 are cytoplasmic. The helical transmembrane segment at Ala123–Val143 threads the bilayer. The Extracellular segment spans residues Cys144–Ser157. The helical transmembrane segment at Leu158–Cys178 threads the bilayer. Topologically, residues Ser179 to Val207 are cytoplasmic. Ser193, Ser194, Ser197, and Ser198 each carry phosphoserine.

This sequence belongs to the claudin family. Interacts with tetraspanin-3/TSPAN3. Interacts with OCLN.

It localises to the cell junction. The protein localises to the tight junction. Its subcellular location is the cell membrane. Its function is as follows. Plays a major role in tight junction-specific obliteration of the intercellular space, through calcium-independent cell-adhesion activity. The polypeptide is Claudin-11 (Cldn11) (Mus musculus (Mouse)).